A 300-amino-acid chain; its full sequence is Transcription initiation factor IIB 1 (300 aa).

Residues 3–34 form a TFIIB-type zinc finger; it reads GKRVCPVCGSTEFIYDPSRGEIVCKVCGYVIE. Cys7, Cys10, Cys26, and Cys29 together coordinate Zn(2+). 2 tandem repeats follow at residues 114 to 197 and 210 to 291.

The protein belongs to the TFIIB family.

Its function is as follows. Stabilizes TBP binding to an archaeal box-A promoter. Also responsible for recruiting RNA polymerase II to the pre-initiation complex (DNA-TBP-TFIIB). The protein is Transcription initiation factor IIB 1 of Thermococcus kodakarensis (strain ATCC BAA-918 / JCM 12380 / KOD1) (Pyrococcus kodakaraensis (strain KOD1)).